The sequence spans 292 residues: Phosphatidylglycerol--prolipoprotein diacylglyceryl transferase (292 aa).

Transmembrane regions (helical) follow at residues 21 to 41, 60 to 80, 98 to 118, 124 to 144, 198 to 218, 225 to 245, and 258 to 278; these read VSLH…MWLA, LLYA…VLFY, GGMS…VFAH, FFQV…AGRL, SQLY…NLFI, GAVS…VEFF, and ISMG…MMIW. Arg143 is an a 1,2-diacyl-sn-glycero-3-phospho-(1'-sn-glycerol) binding site.

It belongs to the Lgt family.

The protein localises to the cell inner membrane. The catalysed reaction is L-cysteinyl-[prolipoprotein] + a 1,2-diacyl-sn-glycero-3-phospho-(1'-sn-glycerol) = an S-1,2-diacyl-sn-glyceryl-L-cysteinyl-[prolipoprotein] + sn-glycerol 1-phosphate + H(+). Its pathway is protein modification; lipoprotein biosynthesis (diacylglyceryl transfer). Functionally, catalyzes the transfer of the diacylglyceryl group from phosphatidylglycerol to the sulfhydryl group of the N-terminal cysteine of a prolipoprotein, the first step in the formation of mature lipoproteins. The polypeptide is Phosphatidylglycerol--prolipoprotein diacylglyceryl transferase (Erwinia tasmaniensis (strain DSM 17950 / CFBP 7177 / CIP 109463 / NCPPB 4357 / Et1/99)).